Here is a 204-residue protein sequence, read N- to C-terminus: Large ribosomal subunit protein bL25 (204 aa).

This sequence belongs to the bacterial ribosomal protein bL25 family. CTC subfamily. Part of the 50S ribosomal subunit; part of the 5S rRNA/L5/L18/L25 subcomplex. Contacts the 5S rRNA. Binds to the 5S rRNA independently of L5 and L18.

In terms of biological role, this is one of the proteins that binds to the 5S RNA in the ribosome where it forms part of the central protuberance. This Burkholderia pseudomallei (strain 668) protein is Large ribosomal subunit protein bL25.